We begin with the raw amino-acid sequence, 264 residues long: MTGSIWAIVPAAGRGTRFGGPLPKQYLPAGGQPLMAYTLAALAAHPALAGIMVAIAPGDADWPGWTAVQSTPVLTCLGGASRAASVLAGLLALPESVRADDFVLVHDAARPNLALADLDRLLEIGRGDPVGAILAAPVRDTLKRAGDDGGIDGTEPRERLWRALTPQLFRRHQLIRGLTEAAAAGVEVTDEAMAMERMGLRPLLVEGAEDNFKVTTPADLARFEFELVNRGLGARDPESAHPQSSVLASAFSGPGSRVSGPEEI.

Positions 234–264 (ARDPESAHPQSSVLASAFSGPGSRVSGPEEI) are disordered.

The protein belongs to the IspD/TarI cytidylyltransferase family. IspD subfamily.

The catalysed reaction is 2-C-methyl-D-erythritol 4-phosphate + CTP + H(+) = 4-CDP-2-C-methyl-D-erythritol + diphosphate. It participates in isoprenoid biosynthesis; isopentenyl diphosphate biosynthesis via DXP pathway; isopentenyl diphosphate from 1-deoxy-D-xylulose 5-phosphate: step 2/6. In terms of biological role, catalyzes the formation of 4-diphosphocytidyl-2-C-methyl-D-erythritol from CTP and 2-C-methyl-D-erythritol 4-phosphate (MEP). In Xanthomonas euvesicatoria pv. vesicatoria (strain 85-10) (Xanthomonas campestris pv. vesicatoria), this protein is 2-C-methyl-D-erythritol 4-phosphate cytidylyltransferase.